The following is a 582-amino-acid chain: MSNLVKIGIRPTIDGRRLGVRESLEEQTMNMAKNLANFIAENVRHVSGDAVECVIADSTIGGVAEAAACADKFKRENVGLSITVTPCWCYGTETIDMDPHMPKAIWGFNGTERPGAVYLAAAMAGHSQVGLPAFSIYGEEVQDKDDTSIPSDVQEKILRFCRAGLTVATIRGKSYLSMGSVSMGIAGSIVDQPFFQHYLGMRNEYVDMTEIKRRLDREIFDKEEFELAMAWTKEHCHEGKDYNREPMSEARKQEDWQTVVKMTMIMRDLMEGNPKLAEMGFGEEALGHNAVVGGFQGQRHWTDHLPNGDFSEAILNSSFDWNGIREPFVIATENDSLNGVNMLFGKMLTGQAQVFCDVRTYWSADSVERVSGYRPESGFIHLVNSGSAALDGCGEAKLTSGESAIKPHWQMSAQDAEACLSATKWPPADVEYFRGGGFSSNFLTHGGMPFTMHRINIIKGIGPVLQIAEGHSITLPQEVHETLNERTNPTWPTTWFVPRLNDEGAFKDVYSVMANWGANHCVITYGHVGADLITLASMLRIPVAMHNVEESDVFRPHTWSAFGQDKEGQDYRACATFGPLYK.

Active-site proton acceptor residues include Glu333 and Asp357. Residues Glu333, Asp357, and His520 each contribute to the Mn(2+) site.

Belongs to the L-fucose isomerase family. Requires Mn(2+) as cofactor.

The protein resides in the cytoplasm. It carries out the reaction L-fucose = L-fuculose. It functions in the pathway carbohydrate degradation; L-fucose degradation; L-lactaldehyde and glycerone phosphate from L-fucose: step 1/3. Functionally, converts the aldose L-fucose into the corresponding ketose L-fuculose. In Vibrio vulnificus (strain YJ016), this protein is L-fucose isomerase.